The chain runs to 443 residues: 23S rRNA (uracil(1939)-C(5))-methyltransferase RlmD (443 aa).

One can recognise a TRAM domain in the interval 8–66; the sequence is KPLPAEPIAAHIESFAHDGKGIAHVDGRVVFVDGALPGEDVTFVYTEIKRDYAAGRVVE. Residues cysteine 79, cysteine 85, cysteine 88, and cysteine 167 each contribute to the [4Fe-4S] cluster site. S-adenosyl-L-methionine-binding residues include glutamine 276, phenylalanine 305, asparagine 310, glutamate 326, aspartate 353, and aspartate 374. Catalysis depends on cysteine 400, which acts as the Nucleophile.

Belongs to the class I-like SAM-binding methyltransferase superfamily. RNA M5U methyltransferase family. RlmD subfamily.

The catalysed reaction is uridine(1939) in 23S rRNA + S-adenosyl-L-methionine = 5-methyluridine(1939) in 23S rRNA + S-adenosyl-L-homocysteine + H(+). Its function is as follows. Catalyzes the formation of 5-methyl-uridine at position 1939 (m5U1939) in 23S rRNA. This chain is 23S rRNA (uracil(1939)-C(5))-methyltransferase RlmD, found in Methylococcus capsulatus (strain ATCC 33009 / NCIMB 11132 / Bath).